The chain runs to 302 residues: Probable alpha-L-glutamate ligase (302 aa).

The ATP-grasp domain maps to 104–287 (MQLLSREGVG…VAGMIIEFIE (184 aa)). ATP is bound by residues Lys-141, 178-179 (EF), Asp-187, and 211-213 (RSN). Positions 248, 260, and 262 each coordinate Mg(2+). Mn(2+) contacts are provided by Asp-248, Glu-260, and Asn-262.

It belongs to the RimK family. Mg(2+) serves as cofactor. It depends on Mn(2+) as a cofactor.

This Halorhodospira halophila (strain DSM 244 / SL1) (Ectothiorhodospira halophila (strain DSM 244 / SL1)) protein is Probable alpha-L-glutamate ligase.